The primary structure comprises 275 residues: Transmembrane protein 202 (275 aa).

The next 4 helical transmembrane spans lie at 60-80, 116-136, 151-171, and 193-213; these read SGFSVLLLACTSPLNLVQFLV, ALFLISILFMLISLGLLLSSC, VSMLSFCSAVSLLLCLNLFLA, and WCSEVLYICVGIISFLNFITF.

It is found in the membrane. The sequence is that of Transmembrane protein 202 (Tmem202) from Mus musculus (Mouse).